Here is an 81-residue protein sequence, read N- to C-terminus: Defensin-like protein 45 (81 aa).

A signal peptide spans 1–27 (MAITKTSATFVLLIILAASLSNFNVLA). 4 disulfides stabilise this stretch: Cys40-Cys79, Cys44-Cys67, Cys53-Cys77, and Cys57-Cys78.

Belongs to the DEFL family.

It is found in the secreted. The polypeptide is Defensin-like protein 45 (Arabidopsis thaliana (Mouse-ear cress)).